We begin with the raw amino-acid sequence, 326 residues long: Pyruvate dehydrogenase E1 component subunit beta (326 aa).

A thiamine diphosphate-binding site is contributed by glutamate 62.

As to quaternary structure, heterodimer of an alpha and a beta chain. The cofactor is thiamine diphosphate.

It carries out the reaction N(6)-[(R)-lipoyl]-L-lysyl-[protein] + pyruvate + H(+) = N(6)-[(R)-S(8)-acetyldihydrolipoyl]-L-lysyl-[protein] + CO2. Functionally, the pyruvate dehydrogenase complex catalyzes the overall conversion of pyruvate to acetyl-CoA and CO(2). It contains multiple copies of three enzymatic components: pyruvate dehydrogenase (E1), dihydrolipoamide acetyltransferase (E2) and lipoamide dehydrogenase (E3). This chain is Pyruvate dehydrogenase E1 component subunit beta (pdhB), found in Mycoplasma genitalium (strain ATCC 33530 / DSM 19775 / NCTC 10195 / G37) (Mycoplasmoides genitalium).